Reading from the N-terminus, the 182-residue chain is Protein GrpE (182 aa).

Positions 1–17 (MEEKKRCEESEKIKEQE) are enriched in basic and acidic residues. The interval 1-33 (MEEKKRCEESEKIKEQENETLPNEDSPSMGKKV) is disordered.

It belongs to the GrpE family. As to quaternary structure, homodimer.

Its subcellular location is the cytoplasm. Its function is as follows. Participates actively in the response to hyperosmotic and heat shock by preventing the aggregation of stress-denatured proteins, in association with DnaK and GrpE. It is the nucleotide exchange factor for DnaK and may function as a thermosensor. Unfolded proteins bind initially to DnaJ; upon interaction with the DnaJ-bound protein, DnaK hydrolyzes its bound ATP, resulting in the formation of a stable complex. GrpE releases ADP from DnaK; ATP binding to DnaK triggers the release of the substrate protein, thus completing the reaction cycle. Several rounds of ATP-dependent interactions between DnaJ, DnaK and GrpE are required for fully efficient folding. The polypeptide is Protein GrpE (Borrelia hermsii (strain HS1 / DAH)).